The following is a 141-amino-acid chain: Putative nickel-responsive regulator (141 aa).

Residues H80, H91, H93, and C99 each coordinate Ni(2+).

Belongs to the transcriptional regulatory CopG/NikR family. Requires Ni(2+) as cofactor.

Transcriptional regulator. In Methanococcus vannielii (strain ATCC 35089 / DSM 1224 / JCM 13029 / OCM 148 / SB), this protein is Putative nickel-responsive regulator.